The chain runs to 379 residues: MANASEPGGGGSGGGAEAAALGLRLATLSLLLCVSLAGNVLFALLIVRERSLHRAPYYLLLDLCLADGLRALACLPAVMLAARRAAAAAGTPPGALGCKLLAFLAALFCFHAAFLLLGVGVTRYLAIAHHRFYAERLAGWPCAAMLVCAAWALALAAAFPPVLDGGGADDEDAPCALEQRPDGAPGALGFLLLLAAVVGATHLVYLRLLFFIHDRRKMRPARLVPAVSHDWTFHGPGATGQAAANWTAGFGRGPTPPALVGIRPAGPGRGARRLLVLEEFKTEKRLCKMFYAITLLFLLLWGPYVVASYLRVLVRPGAVPQAYLTASVWLTFAQAGINPVVCFLFNRELRDCFRAQFPCCQSPQATQATLPCDLKGIGL.

Residues 1 to 26 (MANASEPGGGGSGGGAEAAALGLRLA) lie on the Extracellular side of the membrane. Asn3 carries N-linked (GlcNAc...) asparagine glycosylation. The chain crosses the membrane as a helical span at residues 27–47 (TLSLLLCVSLAGNVLFALLIV). Residues 48–58 (RERSLHRAPYY) are Cytoplasmic-facing. A helical membrane pass occupies residues 59–79 (LLLDLCLADGLRALACLPAVM). Residues 80–100 (LAARRAAAAAGTPPGALGCKL) are Extracellular-facing. Cys98 and Cys175 form a disulfide bridge. A helical membrane pass occupies residues 101 to 121 (LAFLAALFCFHAAFLLLGVGV). At 122-142 (TRYLAIAHHRFYAERLAGWPC) the chain is on the cytoplasmic side. A helical membrane pass occupies residues 143–163 (AAMLVCAAWALALAAAFPPVL). The Extracellular portion of the chain corresponds to 164 to 185 (DGGGADDEDAPCALEQRPDGAP). Residues 186–206 (GALGFLLLLAAVVGATHLVYL) traverse the membrane as a helical segment. Over 207 to 289 (RLLFFIHDRR…FKTEKRLCKM (83 aa)) the chain is Cytoplasmic. The chain crosses the membrane as a helical span at residues 290-310 (FYAITLLFLLLWGPYVVASYL). The Extracellular segment spans residues 311 to 324 (RVLVRPGAVPQAYL). A helical membrane pass occupies residues 325–345 (TASVWLTFAQAGINPVVCFLF). Over 346–379 (NRELRDCFRAQFPCCQSPQATQATLPCDLKGIGL) the chain is Cytoplasmic.

The protein belongs to the G-protein coupled receptor 1 family.

Its subcellular location is the cell membrane. In terms of biological role, orphan receptor. Possible candidate for amine-like G-protein coupled receptor. This Mus musculus (Mouse) protein is Probable G-protein coupled receptor 27 (Gpr27).